The primary structure comprises 311 residues: MKVAVLGAAGGIGQALALLLKTQLPAGSHLSLYDIAPVTPGVAVDLSHIPTAVEIKGFAGEDPTPALVGADVVLISAGVARKPGMDRSDLFNINAGIVRNLIEKVAATCPTALVGIITNPVNTTVAIAAEVMKKAGVYDKNRLFGITTLDVIRSETFIAELKGLNVADVKVNVIGGHSGVTILPLLSQVEGATFTDEEVASLTTRIQNAGTEVVEAKAGGGSATLSMGQAACRFGLSLVRGLQGEANIVECAYVDGGSEHAEFFAQPVLLGKNGIEKVLPYGEVSAFEANARDSMLDTLKGDIKLGVDFVK.

Residues 7-13 (GAAGGIG) and Asp-34 contribute to the NAD(+) site. 2 residues coordinate substrate: Arg-81 and Arg-87. NAD(+) is bound by residues Asn-94 and 117–119 (ITN). Positions 119 and 153 each coordinate substrate. The active-site Proton acceptor is the His-177. Met-227 is an NAD(+) binding site.

It belongs to the LDH/MDH superfamily. MDH type 1 family. Homodimer.

The catalysed reaction is (S)-malate + NAD(+) = oxaloacetate + NADH + H(+). Functionally, catalyzes the reversible oxidation of malate to oxaloacetate. This chain is Malate dehydrogenase, found in Shewanella baltica (strain OS223).